Here is a 621-residue protein sequence, read N- to C-terminus: MAERDLAVAILAAGKGTRMRSQLPKVLHKLGSLSLIERLLRTVLTLKPQRCLVIVGYEQEQVRRALQEYPVEFVEQAQQLGTGHAVQQLLPVLENFQGDLLVVNGDVPLLRAETLQALLERHRQVQPDVTLLSAQVADPYGYGRVFCDAQQRILELVEERDCTPAQRQNRRINSGVYCFHWPALARVLPRLGRNNAQQEYYLTEAVKLLDTAIALDAEDAREIVGINDRRQLAQAYQILQDRLKEAWMEAGVTFVDPDSVSLEETVELAPDVVIEPQTHLRGVCRIGPRTRLGPGSWIESSTIGSDCHILYSVVSHSQIGDRVWVGPYAHVRPHSQIGDGCRIGNFVEIKNAQIGSHTNAAHLAYLGDAKLGSQVNIGAGTIIANYDGQQKHFTEIGDRSKTGANSVLVAPLKIGSDVTIAAGSTIPARYPVPDDCLVIARAYPVVKPGWRPGSAAAGRPQPLPTGSLRVYPLRLLPGQDLKQELERFARQQPLQAGFVLSAVGSLSQATLRLADQTEDYLLSERLEILALSGSLCPDGVHLHLAVADAQGRTWGGHLRPGCLIYTTAEIVLADSLEYRFSRQPDPATGYLELHIEKVAEATPPSPQRADGTGVGIPSCPP.

A pyrophosphorylase region spans residues 1-229 (MAERDLAVAI…AREIVGINDR (229 aa)). UDP-N-acetyl-alpha-D-glucosamine contacts are provided by residues 11–14 (LAAG), Lys-25, Gln-76, and 81–82 (GT). Position 106 (Asp-106) interacts with Mg(2+). UDP-N-acetyl-alpha-D-glucosamine is bound by residues Gly-143, Glu-158, Asn-173, and Asn-227. Asn-227 is a Mg(2+) binding site. The tract at residues 230 to 250 (RQLAQAYQILQDRLKEAWMEA) is linker. The tract at residues 251–621 (GVTFVDPDSV…TGVGIPSCPP (371 aa)) is N-acetyltransferase. Residues Arg-332 and Lys-350 each contribute to the UDP-N-acetyl-alpha-D-glucosamine site. His-362 acts as the Proton acceptor in catalysis. The UDP-N-acetyl-alpha-D-glucosamine site is built by Tyr-365 and Asn-376. Acetyl-CoA-binding positions include Ala-379, 385-386 (NY), Ala-422, and Arg-441. Residues 601–621 (ATPPSPQRADGTGVGIPSCPP) are disordered.

In the N-terminal section; belongs to the N-acetylglucosamine-1-phosphate uridyltransferase family. This sequence in the C-terminal section; belongs to the transferase hexapeptide repeat family. In terms of assembly, homotrimer. Requires Mg(2+) as cofactor.

It localises to the cytoplasm. It carries out the reaction alpha-D-glucosamine 1-phosphate + acetyl-CoA = N-acetyl-alpha-D-glucosamine 1-phosphate + CoA + H(+). It catalyses the reaction N-acetyl-alpha-D-glucosamine 1-phosphate + UTP + H(+) = UDP-N-acetyl-alpha-D-glucosamine + diphosphate. Its pathway is nucleotide-sugar biosynthesis; UDP-N-acetyl-alpha-D-glucosamine biosynthesis; N-acetyl-alpha-D-glucosamine 1-phosphate from alpha-D-glucosamine 6-phosphate (route II): step 2/2. The protein operates within nucleotide-sugar biosynthesis; UDP-N-acetyl-alpha-D-glucosamine biosynthesis; UDP-N-acetyl-alpha-D-glucosamine from N-acetyl-alpha-D-glucosamine 1-phosphate: step 1/1. It participates in bacterial outer membrane biogenesis; LPS lipid A biosynthesis. Catalyzes the last two sequential reactions in the de novo biosynthetic pathway for UDP-N-acetylglucosamine (UDP-GlcNAc). The C-terminal domain catalyzes the transfer of acetyl group from acetyl coenzyme A to glucosamine-1-phosphate (GlcN-1-P) to produce N-acetylglucosamine-1-phosphate (GlcNAc-1-P), which is converted into UDP-GlcNAc by the transfer of uridine 5-monophosphate (from uridine 5-triphosphate), a reaction catalyzed by the N-terminal domain. The sequence is that of Bifunctional protein GlmU from Synechococcus sp. (strain JA-3-3Ab) (Cyanobacteria bacterium Yellowstone A-Prime).